A 68-amino-acid chain; its full sequence is Large ribosomal subunit protein bL33c (68 aa).

This sequence belongs to the bacterial ribosomal protein bL33 family.

The protein resides in the plastid. This Cuscuta exaltata (Tall dodder) protein is Large ribosomal subunit protein bL33c.